Consider the following 493-residue polypeptide: Cobyric acid synthase (493 aa).

The GATase cobBQ-type domain occupies 246–440 (PIDIAVIKMP…IHGVFDGIVF (195 aa)). The Nucleophile role is filled by Cys-326. His-432 is an active-site residue.

It belongs to the CobB/CobQ family. CobQ subfamily.

It participates in cofactor biosynthesis; adenosylcobalamin biosynthesis. In terms of biological role, catalyzes amidations at positions B, D, E, and G on adenosylcobyrinic A,C-diamide. NH(2) groups are provided by glutamine, and one molecule of ATP is hydrogenolyzed for each amidation. This Clostridium botulinum (strain 657 / Type Ba4) protein is Cobyric acid synthase.